We begin with the raw amino-acid sequence, 666 residues long: Nuclear distribution protein nudE homolog 1 (666 aa).

A coiled-coil region spans residues 14 to 195 (EEEIAHYREK…KDQLARAIAT (182 aa)). Disordered regions lie at residues 40–64 (EFQQSSKELEDEMEQELAANDKQQA), 220–310 (DDIN…SGIP), 369–388 (KRVTSTTSTTSSTTTAPAPH), and 397–666 (DHNT…KVKK). The span at 251–274 (RSGTMSSIPVASPSTKRFSQQIPH) shows a compositional bias: polar residues. Composition is skewed to low complexity over residues 275 to 287 (SPSFSTLSRSTTS) and 372 to 383 (TSTTSTTSSTTT). Over residues 400–410 (TTPTAQSQQFP) the composition is skewed to polar residues. Low complexity-rich tracts occupy residues 449-465 (PTFRSSSTTSNRSLPSR), 473-485 (ASGSARSTTSGTA), and 536-554 (SATPTSGFSSFSASASTSN). 2 stretches are compositionally biased toward polar residues: residues 587 to 599 (RQSLSGAGPTPTT) and 614 to 638 (SSLSNMDKPSLMSASSGSRTPSGRP).

This sequence belongs to the nudE family. Self-associates. Interacts with PAC1.

It is found in the cytoplasm. Its subcellular location is the cytoskeleton. Its function is as follows. Required for nuclear migration. This chain is Nuclear distribution protein nudE homolog 1 (NDE1), found in Cryptococcus neoformans var. neoformans serotype D (strain JEC21 / ATCC MYA-565) (Filobasidiella neoformans).